The primary structure comprises 109 residues: Tetracenomycin F2 cyclase (109 aa).

In terms of assembly, homodimer.

The catalysed reaction is tetracenomycin F2 + H(+) = tetracenomycin F1 + H2O. Its pathway is antibiotic biosynthesis; tetracenomycin C biosynthesis. Catalyzing the conversion of tetracenomycin F2 to tetracenomycin F1. This Streptomyces glaucescens protein is Tetracenomycin F2 cyclase (tcmI).